We begin with the raw amino-acid sequence, 564 residues long: Dihydroxy-acid dehydratase (564 aa).

Residue C53 coordinates [2Fe-2S] cluster. D85 contributes to the Mg(2+) binding site. C126 is a binding site for [2Fe-2S] cluster. Mg(2+)-binding residues include D127 and K128. The residue at position 128 (K128) is an N6-carboxylysine. C203 lines the [2Fe-2S] cluster pocket. E454 contacts Mg(2+). S480 acts as the Proton acceptor in catalysis.

This sequence belongs to the IlvD/Edd family. In terms of assembly, homodimer. [2Fe-2S] cluster is required as a cofactor. The cofactor is Mg(2+).

It catalyses the reaction (2R)-2,3-dihydroxy-3-methylbutanoate = 3-methyl-2-oxobutanoate + H2O. It carries out the reaction (2R,3R)-2,3-dihydroxy-3-methylpentanoate = (S)-3-methyl-2-oxopentanoate + H2O. Its pathway is amino-acid biosynthesis; L-isoleucine biosynthesis; L-isoleucine from 2-oxobutanoate: step 3/4. It functions in the pathway amino-acid biosynthesis; L-valine biosynthesis; L-valine from pyruvate: step 3/4. Functionally, functions in the biosynthesis of branched-chain amino acids. Catalyzes the dehydration of (2R,3R)-2,3-dihydroxy-3-methylpentanoate (2,3-dihydroxy-3-methylvalerate) into 2-oxo-3-methylpentanoate (2-oxo-3-methylvalerate) and of (2R)-2,3-dihydroxy-3-methylbutanoate (2,3-dihydroxyisovalerate) into 2-oxo-3-methylbutanoate (2-oxoisovalerate), the penultimate precursor to L-isoleucine and L-valine, respectively. The sequence is that of Dihydroxy-acid dehydratase from Mycobacterium leprae (strain TN).